A 61-amino-acid chain; its full sequence is Large ribosomal subunit protein uL30 (61 aa).

It belongs to the universal ribosomal protein uL30 family. In terms of assembly, part of the 50S ribosomal subunit.

The protein is Large ribosomal subunit protein uL30 of Bifidobacterium adolescentis (strain ATCC 15703 / DSM 20083 / NCTC 11814 / E194a).